A 245-amino-acid chain; its full sequence is 3-deoxy-manno-octulosonate cytidylyltransferase (245 aa).

Belongs to the KdsB family.

The protein resides in the cytoplasm. It carries out the reaction 3-deoxy-alpha-D-manno-oct-2-ulosonate + CTP = CMP-3-deoxy-beta-D-manno-octulosonate + diphosphate. Its pathway is nucleotide-sugar biosynthesis; CMP-3-deoxy-D-manno-octulosonate biosynthesis; CMP-3-deoxy-D-manno-octulosonate from 3-deoxy-D-manno-octulosonate and CTP: step 1/1. It participates in bacterial outer membrane biogenesis; lipopolysaccharide biosynthesis. Its function is as follows. Activates KDO (a required 8-carbon sugar) for incorporation into bacterial lipopolysaccharide in Gram-negative bacteria. The polypeptide is 3-deoxy-manno-octulosonate cytidylyltransferase (Desulfatibacillum aliphaticivorans).